The following is a 264-amino-acid chain: Protein DSE2 (264 aa).

Residues 1-23 form the signal peptide; that stretch reads MQFKKSSIVSFLSLLGSLTKAAA. The span at 75 to 92 shows a compositional bias: low complexity; sequence TRESVVTSTLSSTSLLPE. Residues 75 to 213 are disordered; sequence TRESVVTSTL…STSTSSSSVL (139 aa). Residues 93–104 are compositionally biased toward acidic residues; the sequence is TTEESTQEDEQT. 3 stretches are compositionally biased toward low complexity: residues 105-147, 157-168, and 178-211; these read TDFT…PTTS, STSVITTKSTSK, and TSTLTPTVTSETTESTSAETLSSTDKSTSTSSSS. Asp-247 carries GPI-anchor amidated aspartate lipidation. Positions 248–264 are cleaved as a propeptide — removed in mature form; it reads AATTYTKTRTVYATISS.

It is found in the secreted. Its subcellular location is the cell wall. It localises to the membrane. Involved in pseudohyphal growth, cell wall metabolism and required for the separation of the mother and daughter cells. The polypeptide is Protein DSE2 (DSE2) (Kluyveromyces lactis (strain ATCC 8585 / CBS 2359 / DSM 70799 / NBRC 1267 / NRRL Y-1140 / WM37) (Yeast)).